A 921-amino-acid chain; its full sequence is Isoleucine--tRNA ligase (921 aa).

The short motif at 57–67 (PYANGDIHMGH) is the 'HIGH' region element. Glu-553 contributes to the L-isoleucyl-5'-AMP binding site. Residues 594–598 (KMSKS) carry the 'KMSKS' region motif. Lys-597 contributes to the ATP binding site.

It belongs to the class-I aminoacyl-tRNA synthetase family. IleS type 1 subfamily. Monomer.

The protein resides in the cytoplasm. It carries out the reaction tRNA(Ile) + L-isoleucine + ATP = L-isoleucyl-tRNA(Ile) + AMP + diphosphate. In terms of biological role, catalyzes the attachment of isoleucine to tRNA(Ile). As IleRS can inadvertently accommodate and process structurally similar amino acids such as valine, to avoid such errors it has two additional distinct tRNA(Ile)-dependent editing activities. One activity is designated as 'pretransfer' editing and involves the hydrolysis of activated Val-AMP. The other activity is designated 'posttransfer' editing and involves deacylation of mischarged Val-tRNA(Ile). The polypeptide is Isoleucine--tRNA ligase (Bacillus subtilis (strain 168)).